A 396-amino-acid chain; its full sequence is NADH-quinone oxidoreductase subunit D (396 aa).

Belongs to the complex I 49 kDa subunit family. As to quaternary structure, NDH-1 is composed of 14 different subunits. Subunits NuoB, C, D, E, F, and G constitute the peripheral sector of the complex.

It is found in the cell inner membrane. The enzyme catalyses a quinone + NADH + 5 H(+)(in) = a quinol + NAD(+) + 4 H(+)(out). Its function is as follows. NDH-1 shuttles electrons from NADH, via FMN and iron-sulfur (Fe-S) centers, to quinones in the respiratory chain. The immediate electron acceptor for the enzyme in this species is believed to be ubiquinone. Couples the redox reaction to proton translocation (for every two electrons transferred, four hydrogen ions are translocated across the cytoplasmic membrane), and thus conserves the redox energy in a proton gradient. In Bartonella bacilliformis (strain ATCC 35685 / KC583 / Herrer 020/F12,63), this protein is NADH-quinone oxidoreductase subunit D.